Consider the following 189-residue polypeptide: Large ribosomal subunit protein bL17 (189 aa).

The protein belongs to the bacterial ribosomal protein bL17 family. In terms of assembly, part of the 50S ribosomal subunit. Contacts protein L32.

The polypeptide is Large ribosomal subunit protein bL17 (Rhodococcus jostii (strain RHA1)).